The primary structure comprises 160 residues: Nucleotide-binding protein Tgr7_1196 (160 aa).

The protein belongs to the YajQ family.

In terms of biological role, nucleotide-binding protein. This chain is Nucleotide-binding protein Tgr7_1196, found in Thioalkalivibrio sulfidiphilus (strain HL-EbGR7).